Here is a 156-residue protein sequence, read N- to C-terminus: Putative HTH-type transcriptional regulator BadM (156 aa).

The region spanning 4-130 (RLQKSTMCGL…RSVSITSLLK (127 aa)) is the HTH rrf2-type domain. Positions 136 to 156 (RRKTERGPNGASARHSSAGRA) are disordered. Low complexity predominate over residues 145 to 156 (GASARHSSAGRA).

The chain is Putative HTH-type transcriptional regulator BadM (badM) from Rhodopseudomonas palustris (strain ATCC BAA-98 / CGA009).